The sequence spans 89 residues: Co-chaperonin GroES (89 aa).

The protein belongs to the GroES chaperonin family. As to quaternary structure, heptamer of 7 subunits arranged in a ring. Interacts with the chaperonin GroEL.

The protein localises to the cytoplasm. Functionally, together with the chaperonin GroEL, plays an essential role in assisting protein folding. The GroEL-GroES system forms a nano-cage that allows encapsulation of the non-native substrate proteins and provides a physical environment optimized to promote and accelerate protein folding. GroES binds to the apical surface of the GroEL ring, thereby capping the opening of the GroEL channel. The chain is Co-chaperonin GroES from Parabacteroides distasonis (strain ATCC 8503 / DSM 20701 / CIP 104284 / JCM 5825 / NCTC 11152).